The sequence spans 204 residues: Arginine exporter protein ArgO (204 aa).

6 consecutive transmembrane segments (helical) span residues 1–21 (MFAV…PLGP), 37–57 (LMVA…GIFG), 67–87 (LLLG…GWGA), 111–131 (IIAT…DTFV), 147–167 (WFAL…ALLA), and 179–199 (VQRV…LQLA).

This sequence belongs to the LysE/ArgO transporter (TC 2.A.75) family.

Its subcellular location is the cell inner membrane. The enzyme catalyses L-arginine(in) = L-arginine(out). Functionally, involved in the export of arginine. Important to control the intracellular level of arginine and the correct balance between arginine and lysine. The chain is Arginine exporter protein ArgO from Pectobacterium carotovorum subsp. carotovorum (strain PC1).